The chain runs to 433 residues: Metacaspase-1 (433 aa).

The tract at residues 1-123 (MYPGRAKPTY…PPSQVQHTGP (123 aa)) is disordered. The span at 9–44 (TYNNQQAQQAQSQVGYQTGYSNAQPQQQYYTAPQQQ) shows a compositional bias: low complexity. 2 stretches are compositionally biased toward polar residues: residues 45 to 55 (NVSGSSMSFQH) and 83 to 109 (QQNY…QQPQ). Catalysis depends on residues histidine 222 and cysteine 278.

Belongs to the peptidase C14B family.

Involved in cell death (apoptosis). This is Metacaspase-1 (MCA1) from Kluyveromyces lactis (strain ATCC 8585 / CBS 2359 / DSM 70799 / NBRC 1267 / NRRL Y-1140 / WM37) (Yeast).